A 278-amino-acid chain; its full sequence is 4-hydroxy-3-methylbut-2-enyl diphosphate reductase (278 aa).

Residue Cys12 coordinates [4Fe-4S] cluster. 2 residues coordinate (2E)-4-hydroxy-3-methylbut-2-enyl diphosphate: His36 and His70. Positions 36 and 70 each coordinate dimethylallyl diphosphate. Residues His36 and His70 each contribute to the isopentenyl diphosphate site. Cys92 lines the [4Fe-4S] cluster pocket. A (2E)-4-hydroxy-3-methylbut-2-enyl diphosphate-binding site is contributed by His120. Residue His120 participates in dimethylallyl diphosphate binding. His120 contributes to the isopentenyl diphosphate binding site. Glu122 (proton donor) is an active-site residue. A (2E)-4-hydroxy-3-methylbut-2-enyl diphosphate-binding site is contributed by Thr158. Cys186 provides a ligand contact to [4Fe-4S] cluster. The (2E)-4-hydroxy-3-methylbut-2-enyl diphosphate site is built by Ser214, Asn216, and Ser258. Dimethylallyl diphosphate contacts are provided by Ser214, Asn216, and Ser258. Residues Ser214, Asn216, and Ser258 each contribute to the isopentenyl diphosphate site.

It belongs to the IspH family. It depends on [4Fe-4S] cluster as a cofactor.

The enzyme catalyses isopentenyl diphosphate + 2 oxidized [2Fe-2S]-[ferredoxin] + H2O = (2E)-4-hydroxy-3-methylbut-2-enyl diphosphate + 2 reduced [2Fe-2S]-[ferredoxin] + 2 H(+). The catalysed reaction is dimethylallyl diphosphate + 2 oxidized [2Fe-2S]-[ferredoxin] + H2O = (2E)-4-hydroxy-3-methylbut-2-enyl diphosphate + 2 reduced [2Fe-2S]-[ferredoxin] + 2 H(+). It participates in isoprenoid biosynthesis; dimethylallyl diphosphate biosynthesis; dimethylallyl diphosphate from (2E)-4-hydroxy-3-methylbutenyl diphosphate: step 1/1. It functions in the pathway isoprenoid biosynthesis; isopentenyl diphosphate biosynthesis via DXP pathway; isopentenyl diphosphate from 1-deoxy-D-xylulose 5-phosphate: step 6/6. Its function is as follows. Catalyzes the conversion of 1-hydroxy-2-methyl-2-(E)-butenyl 4-diphosphate (HMBPP) into a mixture of isopentenyl diphosphate (IPP) and dimethylallyl diphosphate (DMAPP). Acts in the terminal step of the DOXP/MEP pathway for isoprenoid precursor biosynthesis. The protein is 4-hydroxy-3-methylbut-2-enyl diphosphate reductase of Campylobacter lari (strain RM2100 / D67 / ATCC BAA-1060).